A 365-amino-acid polypeptide reads, in one-letter code: 2-aminoethylphosphonate--pyruvate transaminase (365 aa).

At lysine 194 the chain carries N6-(pyridoxal phosphate)lysine.

It belongs to the class-V pyridoxal-phosphate-dependent aminotransferase family. PhnW subfamily. As to quaternary structure, homodimer. It depends on pyridoxal 5'-phosphate as a cofactor.

The enzyme catalyses (2-aminoethyl)phosphonate + pyruvate = phosphonoacetaldehyde + L-alanine. Its function is as follows. Involved in phosphonate degradation. This chain is 2-aminoethylphosphonate--pyruvate transaminase, found in Bacillus cereus (strain 03BB102).